The primary structure comprises 361 residues: D-alanine--D-alanine ligase (361 aa).

Residues 134 to 344 (KILAQRAGVP…YTDLITKLID (211 aa)) form the ATP-grasp domain. Residue 169–224 (ASQLGSDLFVKPSNQGSSVGVSHVTNEKEYKVALAEAFKYDDKVLVEETVHGTEVE) participates in ATP binding. Aspartate 297, glutamate 311, and asparagine 313 together coordinate Mg(2+).

Belongs to the D-alanine--D-alanine ligase family. Requires Mg(2+) as cofactor. It depends on Mn(2+) as a cofactor.

It localises to the cytoplasm. It catalyses the reaction 2 D-alanine + ATP = D-alanyl-D-alanine + ADP + phosphate + H(+). Its pathway is cell wall biogenesis; peptidoglycan biosynthesis. Cell wall formation. This is D-alanine--D-alanine ligase from Lactobacillus johnsonii (strain CNCM I-12250 / La1 / NCC 533).